A 539-amino-acid chain; its full sequence is O-phosphoserine--tRNA(Cys) ligase (539 aa).

Residues 188–190, 233–235, 275–276, and N327 contribute to the substrate site; these read HMT, SAS, and YY.

It belongs to the class-II aminoacyl-tRNA synthetase family. O-phosphoseryl-tRNA(Cys) synthetase subfamily. As to quaternary structure, homotetramer. Interacts with SepCysS.

The catalysed reaction is tRNA(Cys) + O-phospho-L-serine + ATP = O-phospho-L-seryl-tRNA(Cys) + AMP + diphosphate. In terms of biological role, catalyzes the attachment of O-phosphoserine (Sep) to tRNA(Cys). The chain is O-phosphoserine--tRNA(Cys) ligase from Methanosarcina acetivorans (strain ATCC 35395 / DSM 2834 / JCM 12185 / C2A).